Consider the following 872-residue polypeptide: MATKRKASALNAAVDDEPVDPSDELAFYCLGGGNEVGRSCHIIQYKGKTVMLDAGMHPAKEGFSALPFFDEFDLSTVDILLISHFHVDHSSALPYVLSKTNFKGRVFMTHATKAIYKWLIQDNVRVSNTASSSDQRTTLYTEHDHLSTLPLIETIDFNTTHTVNSIRITPFPAGHVLGAAMFLISIAGLNILFTGDYSREEDRHLIPAEVPKGIKIDVLITESTFGISTNPPRLEREAALMKSITGILNRGGRVLMPVFALGRAQELLLILDEYWETHPELQKIPIYYIGNTARRCMVVYQTYIGAMNDNIKRLFRQRMAEAEASGDKSASAGPWDFKFVRSLRSLERFDDVGGCVMLASPGMLQTGTSRELLERWAPNERNGVVMTGYSVEGTMAKQLLNEPEQIPAVMSRSAGGVSRRGLAGTDEEQKIMIPRRCTVDEISFAAHVDGVENRNFIEEVAAPVVILVHGEKHQMMRLKSKLLSLNADKAVKVKVYTPANCDEVRIPFRKDKIAKVVGKLAQVAPPSDQDDGRLMSGVLVQNGFDLSLMAPDDLREYAGLTTTTITCKQHITLSSASMDLIRWALEGTFGAIEELGSNERSKVKEESTKAVNGEQEIKEEPADEEIPMEETQTYLVMGCVLIRYHSRTREVELEWEGNMMNDGVADAVMAVLLTVESSPASVKQSAKLKHHHHHHSDLELPNPHAHQGPEETFENLLMMLEAQFGSNIAPIERPRIPSGIRANRTTKADPSVSAAVKTKSDAAGETPAESQEDESTEEIEAAELARLQALGIPYPGIEIKVDKHVARVWLENFEVECANTVLRDRVRVVIERAVETVSSMWGEGHPAARASNGTQGNKEVAVSKSNEIEARA.

The Zn(2+) site is built by His-84, His-86, Asp-88, His-89, His-175, and Asp-196. His-447 functions as the Proton donor in the catalytic mechanism. His-469 contacts Zn(2+). Disordered regions lie at residues Val-682–His-706, Arg-741–Glu-777, and Gly-844–Ala-872. A compositionally biased stretch (basic residues) spans Ala-686–His-695.

Belongs to the metallo-beta-lactamase superfamily. RNA-metabolizing metallo-beta-lactamase-like family. CPSF2/YSH1 subfamily.

The protein localises to the nucleus. In terms of biological role, component of the cleavage factor I (CF I) involved in pre-mRNA 3'-end processing. The chain is Endoribonuclease ysh1 (ysh1) from Aspergillus fumigatus (strain ATCC MYA-4609 / CBS 101355 / FGSC A1100 / Af293) (Neosartorya fumigata).